A 943-amino-acid polypeptide reads, in one-letter code: Tyrosine-protein kinase transmembrane receptor ROR2 (943 aa).

The signal sequence occupies residues 1–33 (MARGSALPRRPLLCIPAVWAAAALLLSVSRTSG). Over 34–403 (EVEVLDPNDP…CSPRDSSKMG (370 aa)) the chain is Extracellular. Residues 55–145 (PTLKGYFLNF…VATNGMKTIT (91 aa)) enclose the Ig-like C2-type domain. N70 is a glycosylation site (N-linked (GlcNAc...) asparagine). 9 disulfides stabilise this stretch: C83-C135, C174-C239, C182-C232, C223-C264, C252-C300, C256-C286, C316-C394, C337-C377, and C365-C389. The 135-residue stretch at 169 to 303 (HEDGFCQPYR…SPDAANCMRI (135 aa)) folds into the FZ domain. Residue N188 is glycosylated (N-linked (GlcNAc...) asparagine). Residues 316–394 (CYNGSGMDYR…RMELCDVPSC (79 aa)) form the Kringle domain. N-linked (GlcNAc...) asparagine glycosylation is present at N318. The helical transmembrane segment at 404-424 (ILYILVPSIAIPLVIACLFFL) threads the bilayer. Residues 425–943 (VCMCRNKQKA…VDEAQVQLEA (519 aa)) lie on the Cytoplasmic side of the membrane. Residues S469 and S471 each carry the sulfoserine; partial modification. The Protein kinase domain maps to 473–746 (VRFMEELGED…PRFKDIHSRL (274 aa)). ATP is bound by residues 479 to 487 (LGEDRFGKV) and K507. The active-site Proton acceptor is the D615. Y646 is modified (phosphotyrosine; by autocatalysis). Disordered stretches follow at residues 757–796 (SSAQTSGASNTTQTSSLSTSPVSNVSNARYVGPKQKAPPF) and 850–931 (QVPP…DCDT). Low complexity-rich tracts occupy residues 765-791 (SNTTQTSSLSTSPVSNVSNARYVGPKQ) and 857-872 (PKPSSHHSGSGSTSTG). R785 bears the Asymmetric dimethylarginine mark. Residues 873–883 (YVTTAPSNTSM) are compositionally biased toward polar residues.

The protein belongs to the protein kinase superfamily. Tyr protein kinase family. ROR subfamily. As to quaternary structure, homodimer; promotes osteogenesis. Binds YWHAB. Interacts with WTIP. Interacts with ROR2. Mg(2+) is required as a cofactor.

The protein resides in the cell membrane. The enzyme catalyses L-tyrosyl-[protein] + ATP = O-phospho-L-tyrosyl-[protein] + ADP + H(+). Functionally, tyrosine-protein kinase receptor which may be involved in the early formation of the chondrocytes. It seems to be required for cartilage and growth plate development. Phosphorylates YWHAB, leading to induction of osteogenesis and bone formation. In contrast, has also been shown to have very little tyrosine kinase activity in vitro. May act as a receptor for wnt ligand WNT5A which may result in the inhibition of WNT3A-mediated signaling. This chain is Tyrosine-protein kinase transmembrane receptor ROR2 (ROR2), found in Homo sapiens (Human).